We begin with the raw amino-acid sequence, 300 residues long: Ribosomal protein L11 methyltransferase (300 aa).

S-adenosyl-L-methionine is bound by residues threonine 152, glycine 173, aspartate 195, and asparagine 234.

This sequence belongs to the methyltransferase superfamily. PrmA family.

Its subcellular location is the cytoplasm. The enzyme catalyses L-lysyl-[protein] + 3 S-adenosyl-L-methionine = N(6),N(6),N(6)-trimethyl-L-lysyl-[protein] + 3 S-adenosyl-L-homocysteine + 3 H(+). In terms of biological role, methylates ribosomal protein L11. The polypeptide is Ribosomal protein L11 methyltransferase (Burkholderia cenocepacia (strain ATCC BAA-245 / DSM 16553 / LMG 16656 / NCTC 13227 / J2315 / CF5610) (Burkholderia cepacia (strain J2315))).